The chain runs to 271 residues: MPRPLKMSYGDQKPPYSYISLTAMAIIHSPQRLLPLSEIYRFIMDQFPFYRKNTQKWQNSLRHNLSFNDCFIKVPRNVTKAGKGSYWTLHPMAFDMFENGSLLRRRKRFRVKQLEKDISNWKLAAAANTEMVTHYLDDQLTQMAFADPARHGHVLANASAAQMSPYKATPPILPTTVTQLPARPKRAFTIESLMAPDPASTPNEGLVPMEYGSPDAVALEKPPFNLPFNFNELAAQYQLYFPSFFYNGQYGNIPCYQKTPPLFHNGPLPVF.

Positions 12-103 (QKPPYSYISL…FDMFENGSLL (92 aa)) form a DNA-binding region, fork-head.

In terms of tissue distribution, expressed in early embryogenesis in 14 symmetrical pairs of segmentally arranged neuroblasts and in developing peripheral nervous system. Also, later in embryogenesis, in a cluster of cells in head region.

It is found in the nucleus. Its function is as follows. Involved in development during embryogenesis. The chain is Fork head domain-containing protein FD5 (fd96Cb) from Drosophila melanogaster (Fruit fly).